Consider the following 257-residue polypeptide: Probable dihydroorotate dehydrogenase B (NAD(+)), electron transfer subunit (257 aa).

Residues 2–89 (EKPVICRIKE…RGPYGTYFEP (88 aa)) form the FAD-binding FR-type domain. Residues Cys208, Cys213, Cys216, and Cys226 each contribute to the [2Fe-2S] cluster site.

Belongs to the PyrK family. As to quaternary structure, heterotetramer of 2 PyrK and 2 PyrD type B subunits. [2Fe-2S] cluster is required as a cofactor. FAD serves as cofactor.

The protein operates within pyrimidine metabolism; UMP biosynthesis via de novo pathway; orotate from (S)-dihydroorotate (NAD(+) route): step 1/1. Functionally, responsible for channeling the electrons from the oxidation of dihydroorotate from the FMN redox center in the PyrD type B subunit to the ultimate electron acceptor NAD(+). In Methanocaldococcus jannaschii (strain ATCC 43067 / DSM 2661 / JAL-1 / JCM 10045 / NBRC 100440) (Methanococcus jannaschii), this protein is Probable dihydroorotate dehydrogenase B (NAD(+)), electron transfer subunit.